An 846-amino-acid chain; its full sequence is Translation initiation factor IF-2 (846 aa).

The segment at Q94–V263 is disordered. A compositionally biased stretch (basic and acidic residues) spans S96–R135. 2 stretches are compositionally biased toward low complexity: residues R136 to P148 and A158 to D176. 2 stretches are compositionally biased toward basic and acidic residues: residues A177–A206 and T230–R239. Basic residues predominate over residues R240–Q253. The 168-residue stretch at S346–E513 folds into the tr-type G domain. The interval G355 to T362 is G1. Residue G355–T362 participates in GTP binding. Residues G380–H384 are G2. The segment at D401–G404 is G3. Residues D401–H405 and N455–D458 each bind GTP. Positions N455–D458 are G4. Residues S491–K493 form a G5 region.

It belongs to the TRAFAC class translation factor GTPase superfamily. Classic translation factor GTPase family. IF-2 subfamily.

The protein localises to the cytoplasm. Functionally, one of the essential components for the initiation of protein synthesis. Protects formylmethionyl-tRNA from spontaneous hydrolysis and promotes its binding to the 30S ribosomal subunits. Also involved in the hydrolysis of GTP during the formation of the 70S ribosomal complex. The polypeptide is Translation initiation factor IF-2 (Pseudomonas putida (strain ATCC 47054 / DSM 6125 / CFBP 8728 / NCIMB 11950 / KT2440)).